Here is a 59-residue protein sequence, read N- to C-terminus: Temperature acclimation protein A (59 aa).

Residues Phe-1 to Val-55 enclose the CSD domain.

It localises to the cytoplasm. In terms of biological role, affects cell viability at low temperatures. This is Temperature acclimation protein A (tapA) from Pseudomonas fragi.